Here is a 333-residue protein sequence, read N- to C-terminus: Phosphoribosylformylglycinamidine cyclo-ligase (333 aa).

This sequence belongs to the AIR synthase family.

It localises to the cytoplasm. It catalyses the reaction 2-formamido-N(1)-(5-O-phospho-beta-D-ribosyl)acetamidine + ATP = 5-amino-1-(5-phospho-beta-D-ribosyl)imidazole + ADP + phosphate + H(+). It participates in purine metabolism; IMP biosynthesis via de novo pathway; 5-amino-1-(5-phospho-D-ribosyl)imidazole from N(2)-formyl-N(1)-(5-phospho-D-ribosyl)glycinamide: step 2/2. This chain is Phosphoribosylformylglycinamidine cyclo-ligase, found in Methanosarcina acetivorans (strain ATCC 35395 / DSM 2834 / JCM 12185 / C2A).